The sequence spans 94 residues: Small ribosomal subunit protein bS6 (94 aa).

Belongs to the bacterial ribosomal protein bS6 family.

Its function is as follows. Binds together with bS18 to 16S ribosomal RNA. The chain is Small ribosomal subunit protein bS6 from Clostridium botulinum (strain Kyoto / Type A2).